A 450-amino-acid polypeptide reads, in one-letter code: Phosphoglucosamine mutase (450 aa).

Ser107 (phosphoserine intermediate) is an active-site residue. Mg(2+) contacts are provided by Ser107, Asp246, Asp248, and Asp250. Ser107 carries the phosphoserine modification.

The protein belongs to the phosphohexose mutase family. The cofactor is Mg(2+). Post-translationally, activated by phosphorylation.

The enzyme catalyses alpha-D-glucosamine 1-phosphate = D-glucosamine 6-phosphate. In terms of biological role, catalyzes the conversion of glucosamine-6-phosphate to glucosamine-1-phosphate. This chain is Phosphoglucosamine mutase, found in Dechloromonas aromatica (strain RCB).